Consider the following 215-residue polypeptide: Probable phosphoglycerate mutase GpmB (215 aa).

Substrate-binding positions include Arg-8–Asn-15, Gln-21–Gly-22, Arg-58, Arg-60, Glu-82–Met-85, Arg-104–Arg-105, and Gly-151–Ile-152. Residue His-9 is the Tele-phosphohistidine intermediate of the active site. Glu-82 serves as the catalytic Proton donor/acceptor.

The protein belongs to the phosphoglycerate mutase family. GpmB subfamily.

It carries out the reaction (2R)-2-phosphoglycerate = (2R)-3-phosphoglycerate. The protein operates within carbohydrate degradation; glycolysis; pyruvate from D-glyceraldehyde 3-phosphate: step 3/5. The protein is Probable phosphoglycerate mutase GpmB of Klebsiella pneumoniae (strain 342).